The chain runs to 172 residues: Small ribosomal subunit protein bS6 (172 aa).

The disordered stretch occupies residues 100 to 172 (LPAKRVVKTS…ENKEIEKKED (73 aa)). A compositionally biased stretch (basic and acidic residues) spans 107–172 (KTSEKNVKED…ENKEIEKKED (66 aa)).

The protein belongs to the bacterial ribosomal protein bS6 family.

In terms of biological role, binds together with bS18 to 16S ribosomal RNA. In Prochlorococcus marinus (strain MIT 9211), this protein is Small ribosomal subunit protein bS6.